Reading from the N-terminus, the 301-residue chain is Indole-3-glycerol phosphate synthase (301 aa).

It belongs to the TrpC family.

It carries out the reaction 1-(2-carboxyphenylamino)-1-deoxy-D-ribulose 5-phosphate + H(+) = (1S,2R)-1-C-(indol-3-yl)glycerol 3-phosphate + CO2 + H2O. Its pathway is amino-acid biosynthesis; L-tryptophan biosynthesis; L-tryptophan from chorismate: step 4/5. This Prochlorococcus marinus (strain MIT 9313) protein is Indole-3-glycerol phosphate synthase.